Here is a 117-residue protein sequence, read N- to C-terminus: Probable non-functional immunoglobulin kappa variable 1D-42 (117 aa).

The signal sequence occupies residues 1-22 (MDMRVPAQLLGLLLLWLPGVRF). The segment at 23 to 45 (DIQMTQSPSFLSASVGDRVSIIC) is framework-1. One can recognise an Ig-like domain in the interval 23-117 (DIQMTQSPSF…YYCKQDFSYP (95 aa)). C45 and C110 are joined by a disulfide. A complementarity-determining-1 region spans residues 46–56 (WASEGISSNLA). A framework-2 region spans residues 57-71 (WYLQKPGKSPKLFLY). Residues 72 to 78 (DAKDLHP) form a complementarity-determining-2 region. Residues 79–110 (GVSSRFSGRGSGTDFTLTIISLKPEDFAAYYC) are framework-3. The interval 111–117 (KQDFSYP) is complementarity-determining-3.

As to quaternary structure, immunoglobulins are composed of two identical heavy chains and two identical light chains; disulfide-linked.

The protein localises to the secreted. It localises to the cell membrane. In terms of biological role, probable non-functional open reading frame (ORF) of V region of the variable domain of immunoglobulin light chains. Non-functional ORF generally cannot participate in the synthesis of a productive immunoglobulin chain due to altered V-(D)-J or switch recombination and/or splicing site (at mRNA level) and/or conserved amino acid change (protein level). Immunoglobulins, also known as antibodies, are membrane-bound or secreted glycoproteins produced by B lymphocytes. In the recognition phase of humoral immunity, the membrane-bound immunoglobulins serve as receptors which, upon binding of a specific antigen, trigger the clonal expansion and differentiation of B lymphocytes into immunoglobulins-secreting plasma cells. Secreted immunoglobulins mediate the effector phase of humoral immunity, which results in the elimination of bound antigens. The antigen binding site is formed by the variable domain of one heavy chain, together with that of its associated light chain. Thus, each immunoglobulin has two antigen binding sites with remarkable affinity for a particular antigen. The variable domains are assembled by a process called V-(D)-J rearrangement and can then be subjected to somatic hypermutations which, after exposure to antigen and selection, allow affinity maturation for a particular antigen. The chain is Probable non-functional immunoglobulin kappa variable 1D-42 from Homo sapiens (Human).